The primary structure comprises 312 residues: Homoserine kinase (312 aa).

94–104 contributes to the ATP binding site; sequence PLGRGLGSSAA.

It belongs to the GHMP kinase family. Homoserine kinase subfamily.

It is found in the cytoplasm. The catalysed reaction is L-homoserine + ATP = O-phospho-L-homoserine + ADP + H(+). It functions in the pathway amino-acid biosynthesis; L-threonine biosynthesis; L-threonine from L-aspartate: step 4/5. In terms of biological role, catalyzes the ATP-dependent phosphorylation of L-homoserine to L-homoserine phosphate. The polypeptide is Homoserine kinase (Caldanaerobacter subterraneus subsp. tengcongensis (strain DSM 15242 / JCM 11007 / NBRC 100824 / MB4) (Thermoanaerobacter tengcongensis)).